A 280-amino-acid polypeptide reads, in one-letter code: Pantothenate synthetase (280 aa).

Residue 30 to 37 participates in ATP binding; the sequence is MGYLHEGH. The active-site Proton donor is the His37. (R)-pantoate is bound at residue Gln61. Residue Gln61 participates in beta-alanine binding. 147–150 provides a ligand contact to ATP; the sequence is GQKD. A (R)-pantoate-binding site is contributed by Gln153. ATP-binding positions include Val176 and 184-187; that span reads MSSR.

The protein belongs to the pantothenate synthetase family. Homodimer.

Its subcellular location is the cytoplasm. The catalysed reaction is (R)-pantoate + beta-alanine + ATP = (R)-pantothenate + AMP + diphosphate + H(+). It functions in the pathway cofactor biosynthesis; (R)-pantothenate biosynthesis; (R)-pantothenate from (R)-pantoate and beta-alanine: step 1/1. Catalyzes the condensation of pantoate with beta-alanine in an ATP-dependent reaction via a pantoyl-adenylate intermediate. This Thermosipho melanesiensis (strain DSM 12029 / CIP 104789 / BI429) protein is Pantothenate synthetase.